Here is a 470-residue protein sequence, read N- to C-terminus: ATP synthase subunit beta (470 aa).

Position 157-164 (157-164 (GGAGVGKT)) interacts with ATP.

The protein belongs to the ATPase alpha/beta chains family. As to quaternary structure, F-type ATPases have 2 components, CF(1) - the catalytic core - and CF(0) - the membrane proton channel. CF(1) has five subunits: alpha(3), beta(3), gamma(1), delta(1), epsilon(1). CF(0) has three main subunits: a(1), b(2) and c(9-12). The alpha and beta chains form an alternating ring which encloses part of the gamma chain. CF(1) is attached to CF(0) by a central stalk formed by the gamma and epsilon chains, while a peripheral stalk is formed by the delta and b chains.

It is found in the cell inner membrane. It catalyses the reaction ATP + H2O + 4 H(+)(in) = ADP + phosphate + 5 H(+)(out). Functionally, produces ATP from ADP in the presence of a proton gradient across the membrane. The catalytic sites are hosted primarily by the beta subunits. This is ATP synthase subunit beta from Geotalea uraniireducens (strain Rf4) (Geobacter uraniireducens).